The chain runs to 310 residues: HTH-type transcriptional regulator PunR (310 aa).

One can recognise an HTH lysR-type domain in the interval 2–59; that stretch reads WSEYSLEVVDAVARNGSFSAAAQELHRVPSAVSYTVRQLEEWLAVPLFERRHRDVELT. A DNA-binding region (H-T-H motif) is located at residues 19-38; sequence FSAAAQELHRVPSAVSYTVR.

Belongs to the LysR transcriptional regulatory family.

The protein resides in the cytoplasm. In terms of biological role, transcriptional regulator that activates the expression of punC, which encodes a purine nucleoside transporter. The sequence is that of HTH-type transcriptional regulator PunR from Escherichia coli O157:H7.